The sequence spans 183 residues: MAPLVGLFLIWAGASVFQQLHPVNGGDIPDPGSKPTPPGMADELPTETYDLPPEIYTTTFLPRTIYPQEEMPYDDKPFPSLLSKANDLNAVFEGPACAFPFTYKGKKYYMCTRKNSVLLWCSLDTEYQGNWKFCTERDEPECVFPFIYRKKSYESCTRVHSFFWRRWCSLTSNYDRDKAWKYC.

The first 25 residues, 1-25 (MAPLVGLFLIWAGASVFQQLHPVNG), serve as a signal peptide directing secretion. A disordered region spans residues 23-47 (VNGGDIPDPGSKPTPPGMADELPTE). O-linked (GalNAc...) threonine glycosylation is found at T36, T46, T57, T58, T59, and T64. Fibronectin type-II domains are found at residues 92 to 136 (FEGP…FCTE) and 137 to 183 (RDEP…WKYC). Intrachain disulfides connect C97–C121, C111–C134, C142–C168, and C156–C183.

This sequence belongs to the seminal plasma protein family.

Its subcellular location is the secreted. In terms of biological role, binds to spermatozoa upon ejaculation and may play a role in sperm capacitation. Displays heparin-, gelatin- and phospholipid-binding activities. This is Seminal plasma protein BSP-30 kDa from Bos taurus (Bovine).